A 189-amino-acid chain; its full sequence is UPF0494 membrane protein C977.06 (189 aa).

A run of 3 helical transmembrane segments spans residues 78–98 (WPLL…NFEV), 120–140 (IWGP…GLIY), and 148–168 (AIPL…VAMV).

The protein belongs to the UPF0494 family.

Its subcellular location is the membrane. This Schizosaccharomyces pombe (strain 972 / ATCC 24843) (Fission yeast) protein is UPF0494 membrane protein C977.06.